Reading from the N-terminus, the 152-residue chain is Deoxyuridine 5'-triphosphate nucleotidohydrolase (152 aa).

Residues 71 to 73, Asn-84, 88 to 90, and Met-98 contribute to the substrate site; these read RSG and LID.

The protein belongs to the dUTPase family. Mg(2+) serves as cofactor.

The enzyme catalyses dUTP + H2O = dUMP + diphosphate + H(+). Its pathway is pyrimidine metabolism; dUMP biosynthesis; dUMP from dCTP (dUTP route): step 2/2. In terms of biological role, this enzyme is involved in nucleotide metabolism: it produces dUMP, the immediate precursor of thymidine nucleotides and it decreases the intracellular concentration of dUTP so that uracil cannot be incorporated into DNA. This is Deoxyuridine 5'-triphosphate nucleotidohydrolase from Shewanella baltica (strain OS155 / ATCC BAA-1091).